A 486-amino-acid polypeptide reads, in one-letter code: Transmembrane protein 39A (486 aa).

The N-linked (GlcNAc...) asparagine glycan is linked to N31. The next 8 helical transmembrane spans lie at 72–92 (SLFF…IQYI), 110–130 (TSLN…VMLA), 155–175 (LILA…WTLV), 182–202 (SVLN…LYCF), 285–305 (EVLF…LCFV), 317–337 (CEHL…QLLP), 418–438 (VLNL…YSLL), and 444–464 (NHTL…FKLL).

It belongs to the TMEM39 family. In terms of assembly, interacts with SACM1L, SEC23A and SEC24A.

The protein resides in the endoplasmic reticulum membrane. Its function is as follows. Regulates autophagy by controlling the spatial distribution and levels of the intracellular phosphatidylinositol 4-phosphate (PtdIns(4)P) pools. Modulates (PtdIns(4)P) levels by regulating the ER-to-Golgi trafficking of the phosphatidylinositide phosphatase SACM1L. In Mus musculus (Mouse), this protein is Transmembrane protein 39A (Tmem39a).